A 144-amino-acid polypeptide reads, in one-letter code: Probable 4-amino-4-deoxy-L-arabinose-phosphoundecaprenol flippase subunit ArnF (144 aa).

Topologically, residues 1-6 (MTHRRA) are cytoplasmic. A helical membrane pass occupies residues 7 to 24 (TLCAMASVALVSAAQLGM). Topologically, residues 25-56 (RWSMSRLPSPVQWLEMQEHAQLDLSALRVVCA) are periplasmic. A helical membrane pass occupies residues 57–77 (SITAYALSMLFWLLALRVLPL). The Cytoplasmic segment spans residues 78–80 (SRA). Residues 81 to 101 (YSLLSISYALVYTLAATLPFF) traverse the membrane as a helical segment. Topologically, residues 102–104 (HET) are periplasmic. Residues 105-125 (FTVSKTVGVSLIVAGVLTINL) form a helical membrane-spanning segment. At 126–144 (RRLPRPSPQDLSHENQRFR) the chain is on the cytoplasmic side.

The protein belongs to the ArnF family. As to quaternary structure, heterodimer of ArnE and ArnF.

The protein resides in the cell inner membrane. It participates in bacterial outer membrane biogenesis; lipopolysaccharide biosynthesis. Translocates 4-amino-4-deoxy-L-arabinose-phosphoundecaprenol (alpha-L-Ara4N-phosphoundecaprenol) from the cytoplasmic to the periplasmic side of the inner membrane. The sequence is that of Probable 4-amino-4-deoxy-L-arabinose-phosphoundecaprenol flippase subunit ArnF from Pseudomonas syringae pv. syringae (strain B728a).